We begin with the raw amino-acid sequence, 151 residues long: 3-dehydroquinate dehydratase (151 aa).

The Proton acceptor role is filled by Tyr-26. Positions 75, 81, and 88 each coordinate substrate. His-101 functions as the Proton donor in the catalytic mechanism. Substrate is bound by residues 102-103 (LS) and Arg-112.

Belongs to the type-II 3-dehydroquinase family. In terms of assembly, homododecamer.

It carries out the reaction 3-dehydroquinate = 3-dehydroshikimate + H2O. It functions in the pathway metabolic intermediate biosynthesis; chorismate biosynthesis; chorismate from D-erythrose 4-phosphate and phosphoenolpyruvate: step 3/7. Functionally, catalyzes a trans-dehydration via an enolate intermediate. In Shewanella sediminis (strain HAW-EB3), this protein is 3-dehydroquinate dehydratase.